Consider the following 467-residue polypeptide: 55 kDa erythrocyte membrane protein (467 aa).

The PDZ domain maps to Glu73–Pro154. One can recognise an SH3 domain in the interval Pro160–Ala230. One can recognise a Guanylate kinase-like domain in the interval Arg283–Glu452.

Belongs to the MAGUK family. Post-translationally, extensively palmitoylated.

It localises to the membrane. Functionally, may play a role in the regulation of neutrophil polarization. This chain is 55 kDa erythrocyte membrane protein (mpp1), found in Takifugu rubripes (Japanese pufferfish).